The sequence spans 429 residues: Aspartate--tRNA(Asp/Asn) ligase (429 aa).

Glu-167 serves as a coordination point for L-aspartate. Positions 189–192 (QLYK) are aspartate. Residue Arg-210 coordinates L-aspartate. ATP contacts are provided by residues 210–212 (RAE) and Glu-352. Positions 352 and 355 each coordinate Mg(2+). 2 residues coordinate L-aspartate: Ser-355 and Arg-359. Residue 400–403 (GLAR) participates in ATP binding.

This sequence belongs to the class-II aminoacyl-tRNA synthetase family. Type 2 subfamily. Homodimer. It depends on Mg(2+) as a cofactor.

It localises to the cytoplasm. The enzyme catalyses tRNA(Asx) + L-aspartate + ATP = L-aspartyl-tRNA(Asx) + AMP + diphosphate. Aspartyl-tRNA synthetase with relaxed tRNA specificity since it is able to aspartylate not only its cognate tRNA(Asp) but also tRNA(Asn). Reaction proceeds in two steps: L-aspartate is first activated by ATP to form Asp-AMP and then transferred to the acceptor end of tRNA(Asp/Asn). In Saccharolobus solfataricus (strain ATCC 35092 / DSM 1617 / JCM 11322 / P2) (Sulfolobus solfataricus), this protein is Aspartate--tRNA(Asp/Asn) ligase.